Consider the following 361-residue polypeptide: Chorismate synthase (361 aa).

The NADP(+) site is built by Arg-48 and Arg-54. FMN contacts are provided by residues 125–127 (RSS), 238–239 (NA), Gly-278, 293–297 (KPTSS), and Arg-319.

It belongs to the chorismate synthase family. In terms of assembly, homotetramer. The cofactor is FMNH2.

The catalysed reaction is 5-O-(1-carboxyvinyl)-3-phosphoshikimate = chorismate + phosphate. It participates in metabolic intermediate biosynthesis; chorismate biosynthesis; chorismate from D-erythrose 4-phosphate and phosphoenolpyruvate: step 7/7. Its function is as follows. Catalyzes the anti-1,4-elimination of the C-3 phosphate and the C-6 proR hydrogen from 5-enolpyruvylshikimate-3-phosphate (EPSP) to yield chorismate, which is the branch point compound that serves as the starting substrate for the three terminal pathways of aromatic amino acid biosynthesis. This reaction introduces a second double bond into the aromatic ring system. This chain is Chorismate synthase, found in Yersinia pseudotuberculosis serotype O:1b (strain IP 31758).